A 286-amino-acid chain; its full sequence is Tyrosine recombinase Tlet_1492 (286 aa).

The Core-binding (CB) domain maps to 1-86 (MERILQNFSD…SLRSFFNYLQ (86 aa)). Residues 107-280 (RIPDFLLPSE…VDQEKFDAIN (174 aa)) enclose the Tyr recombinase domain. Catalysis depends on residues Arg-143, Lys-168, His-232, Arg-235, and His-258. The active-site O-(3'-phospho-DNA)-tyrosine intermediate is Tyr-267.

This sequence belongs to the 'phage' integrase family.

It localises to the cytoplasm. Functionally, site-specific tyrosine recombinase, which acts by catalyzing the cutting and rejoining of the recombining DNA molecules. This chain is Tyrosine recombinase Tlet_1492, found in Pseudothermotoga lettingae (strain ATCC BAA-301 / DSM 14385 / NBRC 107922 / TMO) (Thermotoga lettingae).